Consider the following 436-residue polypeptide: Trigger factor (436 aa).

Positions 161–246 (GDQVNIDFVG…VNSVAAPQLP (86 aa)) constitute a PPIase FKBP-type domain.

The protein belongs to the FKBP-type PPIase family. Tig subfamily.

The protein resides in the cytoplasm. It catalyses the reaction [protein]-peptidylproline (omega=180) = [protein]-peptidylproline (omega=0). Its function is as follows. Involved in protein export. Acts as a chaperone by maintaining the newly synthesized protein in an open conformation. Functions as a peptidyl-prolyl cis-trans isomerase. The chain is Trigger factor from Stutzerimonas stutzeri (strain A1501) (Pseudomonas stutzeri).